A 141-amino-acid polypeptide reads, in one-letter code: Hemoglobin subunit beta (141 aa).

The region spanning 2 to 141 is the Globin domain; the sequence is HWSEVELHEI…VVDAISKEYH (140 aa). Heme b is bound by residues H58 and H87.

The protein belongs to the globin family. In terms of assembly, heterotetramer of two alpha chains and two beta chains. In terms of tissue distribution, red blood cells.

Involved in oxygen transport from the lung to the various peripheral tissues. The chain is Hemoglobin subunit beta (HBB) from Heterodontus portusjacksoni (Port Jackson shark).